The chain runs to 357 residues: Sulfate/thiosulfate import ATP-binding protein CysA (357 aa).

An ABC transporter domain is found at 3–237; sequence ITIQNLNKHF…PENAFVTEFL (235 aa). An ATP-binding site is contributed by 35 to 42; sequence GPSGCGKT.

It belongs to the ABC transporter superfamily. Sulfate/tungstate importer (TC 3.A.1.6) family. The complex is composed of two ATP-binding proteins (CysA), two transmembrane proteins (CysT and CysW) and a solute-binding protein (CysP).

The protein resides in the cell inner membrane. The enzyme catalyses sulfate(out) + ATP + H2O = sulfate(in) + ADP + phosphate + H(+). It catalyses the reaction thiosulfate(out) + ATP + H2O = thiosulfate(in) + ADP + phosphate + H(+). Functionally, part of the ABC transporter complex CysAWTP involved in sulfate/thiosulfate import. Responsible for energy coupling to the transport system. This Neisseria meningitidis serogroup B (strain ATCC BAA-335 / MC58) protein is Sulfate/thiosulfate import ATP-binding protein CysA.